Here is an 878-residue protein sequence, read N- to C-terminus: Aconitate hydratase A (878 aa).

3 residues coordinate [4Fe-4S] cluster: Cys-426, Cys-492, and Cys-495.

This sequence belongs to the aconitase/IPM isomerase family. Monomer. The cofactor is [4Fe-4S] cluster.

It carries out the reaction citrate = D-threo-isocitrate. The catalysed reaction is (2S,3R)-3-hydroxybutane-1,2,3-tricarboxylate = 2-methyl-cis-aconitate + H2O. It participates in carbohydrate metabolism; tricarboxylic acid cycle; isocitrate from oxaloacetate: step 2/2. It functions in the pathway organic acid metabolism; propanoate degradation. In terms of biological role, involved in the catabolism of short chain fatty acids (SCFA) via the tricarboxylic acid (TCA)(acetyl degradation route) and probably the 2-methylcitrate cycle I (propionate degradation route). Catalyzes the reversible isomerization of citrate to isocitrate via cis-aconitate. Could catalyze the hydration of 2-methyl-cis-aconitate to yield (2R,3S)-2-methylisocitrate. The apo form of AcnA functions as a RNA-binding regulatory protein. This chain is Aconitate hydratase A (acnA), found in Rickettsia conorii (strain ATCC VR-613 / Malish 7).